The following is a 108-amino-acid chain: Phosphoribosyl-AMP cyclohydrolase (108 aa).

A Mg(2+)-binding site is contributed by Asp-78. Cys-79 lines the Zn(2+) pocket. Positions 80 and 82 each coordinate Mg(2+). 2 residues coordinate Zn(2+): Cys-95 and Cys-102.

It belongs to the PRA-CH family. Homodimer. Requires Mg(2+) as cofactor. It depends on Zn(2+) as a cofactor.

It is found in the cytoplasm. It catalyses the reaction 1-(5-phospho-beta-D-ribosyl)-5'-AMP + H2O = 1-(5-phospho-beta-D-ribosyl)-5-[(5-phospho-beta-D-ribosylamino)methylideneamino]imidazole-4-carboxamide. It functions in the pathway amino-acid biosynthesis; L-histidine biosynthesis; L-histidine from 5-phospho-alpha-D-ribose 1-diphosphate: step 3/9. In terms of biological role, catalyzes the hydrolysis of the adenine ring of phosphoribosyl-AMP. This is Phosphoribosyl-AMP cyclohydrolase from Cenarchaeum symbiosum (strain A).